The primary structure comprises 162 residues: Large ribosomal subunit protein uL15 (162 aa).

The interval 1 to 41 (MKLSDIADNAGSRKKRMRVGRGIGSGKGKTAGRGGKGQTAR) is disordered. Gly residues predominate over residues 21 to 37 (RGIGSGKGKTAGRGGKG).

It belongs to the universal ribosomal protein uL15 family. As to quaternary structure, part of the 50S ribosomal subunit.

Binds to the 23S rRNA. The polypeptide is Large ribosomal subunit protein uL15 (Rhodopseudomonas palustris (strain BisB18)).